Here is a 100-residue protein sequence, read N- to C-terminus: Large ribosomal subunit protein uL23 (100 aa).

It belongs to the universal ribosomal protein uL23 family. Part of the 50S ribosomal subunit. Contacts protein L29, and trigger factor when it is bound to the ribosome.

Functionally, one of the early assembly proteins it binds 23S rRNA. One of the proteins that surrounds the polypeptide exit tunnel on the outside of the ribosome. Forms the main docking site for trigger factor binding to the ribosome. In Mycobacteroides abscessus (strain ATCC 19977 / DSM 44196 / CCUG 20993 / CIP 104536 / JCM 13569 / NCTC 13031 / TMC 1543 / L948) (Mycobacterium abscessus), this protein is Large ribosomal subunit protein uL23.